The chain runs to 316 residues: Thymidylate synthase (316 aa).

Residues Arg23 and 178–179 each bind dUMP; that span reads RR. Cys198 acts as the Nucleophile in catalysis. DUMP-binding positions include 218 to 221, Asn229, and 259 to 261; these read RSGD and HIY. Asp221 is a (6R)-5,10-methylene-5,6,7,8-tetrahydrofolate binding site. Ala315 lines the (6R)-5,10-methylene-5,6,7,8-tetrahydrofolate pocket.

Belongs to the thymidylate synthase family. Bacterial-type ThyA subfamily. In terms of assembly, homodimer.

It localises to the cytoplasm. The catalysed reaction is dUMP + (6R)-5,10-methylene-5,6,7,8-tetrahydrofolate = 7,8-dihydrofolate + dTMP. It participates in pyrimidine metabolism; dTTP biosynthesis. Its function is as follows. Catalyzes the reductive methylation of 2'-deoxyuridine-5'-monophosphate (dUMP) to 2'-deoxythymidine-5'-monophosphate (dTMP) while utilizing 5,10-methylenetetrahydrofolate (mTHF) as the methyl donor and reductant in the reaction, yielding dihydrofolate (DHF) as a by-product. This enzymatic reaction provides an intracellular de novo source of dTMP, an essential precursor for DNA biosynthesis. This is Thymidylate synthase from Pediococcus pentosaceus (strain ATCC 25745 / CCUG 21536 / LMG 10740 / 183-1w).